The sequence spans 181 residues: Large ribosomal subunit protein uL6 (181 aa).

Belongs to the universal ribosomal protein uL6 family. As to quaternary structure, part of the 50S ribosomal subunit.

Its function is as follows. This protein binds to the 23S rRNA, and is important in its secondary structure. It is located near the subunit interface in the base of the L7/L12 stalk, and near the tRNA binding site of the peptidyltransferase center. The sequence is that of Large ribosomal subunit protein uL6 from Synechococcus sp. (strain JA-3-3Ab) (Cyanobacteria bacterium Yellowstone A-Prime).